The sequence spans 847 residues: Aryl hydrocarbon receptor (847 aa).

The disordered stretch occupies residues 1 to 39; the sequence is MNGGGANITYASRKRRKPVQKTVKPIPAEGIKSNPSKRH. 2 consecutive short sequence motifs (nuclear localization signal) follow at residues 13–16 and 37–42; these read RKRR and KRHRDR. The bHLH domain occupies 27–80; the sequence is PAEGIKSNPSKRHRDRLNTELDRLASLLPFPQDVINKLDKLSVLRLSVSYLRAK. Residues 38–66 form a DNA-binding region; that stretch reads RHRDRLNTELDRLASLLPFPQDVINKLDK. Required for maintaining the overall integrity of the AHR:ARNT heterodimer and its transcriptional activity regions lie at residues 50-82, 117-125, and 264-266; these read LASL…AKSF, LLQALNGFV, and FAI. The Nuclear export signal motif lies at 64–72; sequence LDKLSVLRL. Positions 120–173 constitute a PAS 1 domain; the sequence is ALNGFVLVVTVDALVFYASSTIQDYLGFQQSDVIHQSVYELIHTEDRAEFQRQL. Residues 281–336 form the PAS 2 domain; sequence KNFIFRTKHKLDFTPTGCDAKGQIVLGYTEAELCMRGSGYQFIHAADMLYCAESHI. Positions 346–384 constitute a PAC domain; it reads LAVFRLLTKDNRWAWVQSNARFIYKNGRPDFIIATQRPL. Disordered stretches follow at residues 430-452 and 825-847; these read KSGT…VHPS and HLPP…GRLL. Positions 440-452 are enriched in polar residues; that stretch reads TKPTPSKDSVHPS.

Homodimer. Heterodimer; efficient DNA binding requires dimerization with another bHLH protein. Binds MYBBP1A. Interacts with coactivators including SRC-1, RIP140 and NOCA7, and with the corepressor SMRT. Interacts with NEDD8 and IVNS1ABP. Interacts with BMAL1. Interacts with HSP90AB1. Interacts with ARNT; the heterodimer ARNT:AHR binds to core DNA sequence 5'-TGCGTG-3' within the dioxin response element (DRE) of target gene promoters and activates their transcription. Interacts with TIPARP; leading to mono-ADP-ribosylation of AHR and subsequent inhibition of AHR. Mono-ADP-ribosylated, leading to inhibit transcription activator activity of AHR.

It is found in the cytoplasm. The protein localises to the nucleus. Functionally, ligand-activated transcription factor that enables cells to adapt to changing conditions by sensing compounds from the environment, diet, microbiome and cellular metabolism, and which plays important roles in development, immunity and cancer. Upon ligand binding, translocates into the nucleus, where it heterodimerizes with ARNT and induces transcription by binding to xenobiotic response elements (XRE). Regulates a variety of biological processes, including angiogenesis, hematopoiesis, drug and lipid metabolism, cell motility and immune modulation. Xenobiotics can act as ligands: upon xenobiotic-binding, activates the expression of multiple phase I and II xenobiotic chemical metabolizing enzyme genes (such as the CYP1A1 gene). Mediates biochemical and toxic effects of halogenated aromatic hydrocarbons. Next to xenobiotics, natural ligands derived from plants, microbiota, and endogenous metabolism are potent AHR agonists. Tryptophan (Trp) derivatives constitute an important class of endogenous AHR ligands. Acts as a negative regulator of anti-tumor immunity: indoles and kynurenic acid generated by Trp catabolism act as ligand and activate AHR, thereby promoting AHR-driven cancer cell motility and suppressing adaptive immunity. Regulates the circadian clock by inhibiting the basal and circadian expression of the core circadian component PER1. Inhibits PER1 by repressing the CLOCK-BMAL1 heterodimer mediated transcriptional activation of PER1. The heterodimer ARNT:AHR binds to core DNA sequence 5'-TGCGTG-3' within the dioxin response element (DRE) of target gene promoters and activates their transcription. In Oryctolagus cuniculus (Rabbit), this protein is Aryl hydrocarbon receptor (AHR).